A 59-amino-acid polypeptide reads, in one-letter code: Putative potassium channel toxin Ts23 (59 aa).

The first 22 residues, 1-22, serve as a signal peptide directing secretion; that stretch reads MKAFYGILIIFILISMLDLSQQ. 3 disulfides stabilise this stretch: cysteine 29-cysteine 50, cysteine 35-cysteine 55, and cysteine 39-cysteine 57.

Belongs to the short scorpion toxin superfamily. Potassium channel inhibitor family. Alpha-KTx 04 subfamily. Expressed by the venom gland.

It is found in the secreted. Potently blocks Kv1.1/KCNA1 (85%), Kv1.2/KCNA2 (91%), Kv1.3/KCNA3 (89%), Kv1.6/KCNA6 (94%), and Shaker (97%). The protein is Putative potassium channel toxin Ts23 of Tityus serrulatus (Brazilian scorpion).